Reading from the N-terminus, the 156-residue chain is Small ribosomal subunit protein uS7 (156 aa).

Belongs to the universal ribosomal protein uS7 family. As to quaternary structure, part of the 30S ribosomal subunit. Contacts proteins S9 and S11.

Functionally, one of the primary rRNA binding proteins, it binds directly to 16S rRNA where it nucleates assembly of the head domain of the 30S subunit. Is located at the subunit interface close to the decoding center, probably blocks exit of the E-site tRNA. The polypeptide is Small ribosomal subunit protein uS7 (Hahella chejuensis (strain KCTC 2396)).